The following is a 789-amino-acid chain: Phenylalanine--tRNA ligase beta subunit (789 aa).

Residues 39 to 149 (ADGLEAFRIA…HEAPVGQSYV (111 aa)) enclose the tRNA-binding domain. The 73-residue stretch at 399–471 (SAVPVISYDP…RIEGLDNVPS (73 aa)) folds into the B5 domain. Mg(2+)-binding residues include Asp449, Asp455, and Asp459. Residues 696–788 (SMLQPVFRDF…AAAKKGARLR (93 aa)) form the FDX-ACB domain.

This sequence belongs to the phenylalanyl-tRNA synthetase beta subunit family. Type 1 subfamily. Tetramer of two alpha and two beta subunits. It depends on Mg(2+) as a cofactor.

The protein localises to the cytoplasm. It catalyses the reaction tRNA(Phe) + L-phenylalanine + ATP = L-phenylalanyl-tRNA(Phe) + AMP + diphosphate + H(+). In Zymomonas mobilis subsp. mobilis (strain ATCC 31821 / ZM4 / CP4), this protein is Phenylalanine--tRNA ligase beta subunit.